The following is a 379-amino-acid chain: S-adenosylmethionine decarboxylase proenzyme (379 aa).

Residues Glu30 and Glu33 contribute to the active site. Catalysis depends on Ser96, which acts as the Schiff-base intermediate with substrate; via pyruvic acid. A Pyruvic acid (Ser); by autocatalysis modification is found at Ser96. Residue Cys110 is the Proton donor; for catalytic activity of the active site. Residues Ser254 and His267 each act as proton acceptor; for processing activity in the active site.

It belongs to the eukaryotic AdoMetDC family. As to quaternary structure, heterotetramer of two alpha and two beta chains. The cofactor is pyruvate. In terms of processing, is synthesized initially as an inactive proenzyme. Formation of the active enzyme involves a self-maturation process in which the active site pyruvoyl group is generated from an internal serine residue via an autocatalytic post-translational modification. Two non-identical subunits are generated from the proenzyme in this reaction, and the pyruvate is formed at the N-terminus of the alpha chain, which is derived from the carboxyl end of the proenzyme. The post-translation cleavage follows an unusual pathway, termed non-hydrolytic serinolysis, in which the side chain hydroxyl group of the serine supplies its oxygen atom to form the C-terminus of the beta chain, while the remainder of the serine residue undergoes an oxidative deamination to produce ammonia and the pyruvoyl group blocking the N-terminus of the alpha chain.

The enzyme catalyses S-adenosyl-L-methionine + H(+) = S-adenosyl 3-(methylsulfanyl)propylamine + CO2. It participates in amine and polyamine biosynthesis; S-adenosylmethioninamine biosynthesis; S-adenosylmethioninamine from S-adenosyl-L-methionine: step 1/1. S-adenosylmethionine decarboxylase is essential for the biosynthesis of spermine and spermidine. The alpha subunit contains the active site. The chain is S-adenosylmethionine decarboxylase proenzyme (amd1) from Dictyostelium discoideum (Social amoeba).